A 650-amino-acid chain; its full sequence is MGKIIGIDLGTTNSCVAILEGNTPKVIENSEGARTTPSIIAYMEDGEILVGAPAKRQAVTNPRNTLYAVKRLIGRKFEEKEVQKDIGLMPYSIVKADNGDAWVSVRDQKLAPPQVSAEVLRKMKKTAEDYLGEPVTEAVITVPAYFNDSQRQATKDAGRIAGLDVKRIINEPTAAALAFGMDKNEKGDRKIAVYDLGGGTFDISIIEIADVDGEKQFEVLSTNGDTFLGGEDFDQRIIDYIISEFKKDQGVDLSKDVLALQRLKEAAEKAKIELSSSQQTEINLPYITADASGPKHLNLKMTRAKLESLVEELITRTIEPCRIAIKDAGVKVSDIDDVILVGGMTRMPKVQEQVKEFFGKEARKDVNPDEAVAVGAAIQGSVLSGDRTDVLLLDVTPLSLGIETLGGVMTKMITKNTTIPTKHAQVFSTADDNQPAVTIKVFQGEREMASGNKLLGEFNLEGIPPAARGTPQIEVSFDIDANGILHVGAKDKATGKENRITIKANSGLSEDEIQRMVKDAEANAEEDKKARELADARNQADALIHSTKKALTEYGDKLEAGEKEKIEAAIKELEDAARGGDKAEIDAKVNALSEVSQKLGEKVYADMQAKAGEGATAGAAAGAGAAGGQQAQPQDDNVVDAEFKEVNDKK.

T200 is modified (phosphothreonine; by autocatalysis). The span at 612–632 shows a compositional bias: low complexity; that stretch reads GEGATAGAAAGAGAAGGQQAQ. Positions 612 to 650 are disordered; the sequence is GEGATAGAAAGAGAAGGQQAQPQDDNVVDAEFKEVNDKK. Positions 641–650 are enriched in basic and acidic residues; sequence AEFKEVNDKK.

The protein belongs to the heat shock protein 70 family.

Acts as a chaperone. The chain is Chaperone protein DnaK from Cupriavidus necator (strain ATCC 17699 / DSM 428 / KCTC 22496 / NCIMB 10442 / H16 / Stanier 337) (Ralstonia eutropha).